The primary structure comprises 865 residues: Anaphase-promoting complex subunit 6 (865 aa).

3 TPR repeats span residues 11–42 (IEKQLKEKIENALSIHSYPTAIFFSDKLLNLV), 46–75 (SKEYVKILYILCDALYLDRQFQRSSYLIQK), and 88–149 (EDYQ…LQIL). Residues 153–293 (NDSSENMDDE…NNNNNNNNNF (141 aa)) form a disordered region. Positions 183 to 202 (NCDDDDDDDDDDDDDDDDEK) are enriched in acidic residues. The segment covering 249-292 (NKNNNKNNNNNNNNNNNNNNNNNNNNNNNNNNNNNNNNNNNNNN) has biased composition (low complexity). TPR repeat units follow at residues 300–331 (IRSSISCLKGKCYESMDNLKKAKFWYIKALLT), 336–359 (FEAFESLTKNHLLTYQEEISLLEK), 366–438 (DSWI…DIST), 478–506 (DIQTWISEYYFYRHQFQESYSITKRILKQ), 515–542 (CLMVNISSMFELQLTNELYFTCHQLVDS), 573–602 (AISWYGVACYYHLIQNSDQTQRFFTKSTTL), 607–635 (GASWLGFGHFFASKGEHDQAMAAYRTSSR), 642–670 (LPLLCIGMELIRVHNLNLASQYILQAKDI), and 675–709 (PMIFNELGIIEYKNSQYNEAIKLFETALEICKIKS). A compositionally biased stretch (low complexity) spans 403-434 (SNNNTFGANNNNNNNNNNNNNNNNNNNNNSNN). The interval 403–436 (SNNNTFGANNNNNNNNNNNNNNNNNNNNNSNNDI) is disordered. The tract at residues 738–767 (GIGNNNNNNNNRRTTTTTTTTSNNQKKNSS) is disordered. TPR repeat units follow at residues 777 to 809 (ESWEPTIYNLAHCYRKLRKFELALHYYTMSLSL) and 814 to 843 (PSTYSALGFTHHLQGNFDEAIDYYHQSLSI).

Belongs to the APC6/CDC16 family. The APC/C is composed of at least 13 subunits that stay tightly associated throughout the cell cycle: anapc1, anapc2, anapc3, anapc4, anapc5, anapc6, anapc7, anapc8, anapc10, anapc11, cdc20, cdc26 and cdh1.

Its subcellular location is the nucleus. Its pathway is protein modification; protein ubiquitination. In terms of biological role, component of the anaphase promoting complex/cyclosome (APC/C), a cell cycle-regulated E3 ubiquitin-protein ligase complex that controls progression through mitosis and the G1 phase of the cell cycle. This is Anaphase-promoting complex subunit 6 (anapc6) from Dictyostelium discoideum (Social amoeba).